Consider the following 264-residue polypeptide: Thymidylate synthase (264 aa).

Arg21 is a binding site for dUMP. His51 provides a ligand contact to (6R)-5,10-methylene-5,6,7,8-tetrahydrofolate. 126–127 (RR) is a binding site for dUMP. Cys146 acts as the Nucleophile in catalysis. Residues 166-169 (RSAD), Asn177, and 207-209 (HLY) each bind dUMP. Asp169 serves as a coordination point for (6R)-5,10-methylene-5,6,7,8-tetrahydrofolate. Ala263 serves as a coordination point for (6R)-5,10-methylene-5,6,7,8-tetrahydrofolate.

Belongs to the thymidylate synthase family. Bacterial-type ThyA subfamily. As to quaternary structure, homodimer.

It localises to the cytoplasm. It catalyses the reaction dUMP + (6R)-5,10-methylene-5,6,7,8-tetrahydrofolate = 7,8-dihydrofolate + dTMP. The protein operates within pyrimidine metabolism; dTTP biosynthesis. Functionally, catalyzes the reductive methylation of 2'-deoxyuridine-5'-monophosphate (dUMP) to 2'-deoxythymidine-5'-monophosphate (dTMP) while utilizing 5,10-methylenetetrahydrofolate (mTHF) as the methyl donor and reductant in the reaction, yielding dihydrofolate (DHF) as a by-product. This enzymatic reaction provides an intracellular de novo source of dTMP, an essential precursor for DNA biosynthesis. This chain is Thymidylate synthase, found in Dechloromonas aromatica (strain RCB).